The following is a 195-amino-acid chain: Interferon tau (195 aa).

An N-terminal signal peptide occupies residues Met1–Gly23. Cystine bridges form between Cys24-Cys122 and Cys52-Cys162.

It belongs to the alpha/beta interferon family. IFN-alphaII subfamily. Constitutively and exclusively expressed in the mononuclear cells of the extraembryonic trophectoderm.

The protein resides in the secreted. Functionally, paracrine hormone primarily responsible for maternal recognition of pregnancy. Interacts with endometrial receptors, probably type I interferon receptors, and blocks estrogen receptor expression, preventing the estrogen-induced increase in oxytocin receptor expression in the endometrium. This results in the suppression of the pulsatile endometrial release of the luteolytic hormone prostaglandin F2-alpha, hindering the regression of the corpus luteum (luteolysis) and therefore a return to ovarian cyclicity. This, and a possible direct effect of IFN-tau on prostaglandin synthesis, leads in turn to continued ovarian progesterone secretion, which stimulates the secretion by the endometrium of the nutrients required for the growth of the conceptus. In summary, displays particularly high antiviral and antiproliferative potency concurrently with particular weak cytotoxicity, high antiluteolytic activity and immunomodulatory properties. In contrast with other IFNs, IFN-tau is not virally inducible. This Cervus elaphus (Red deer) protein is Interferon tau (IFNT).